Here is a 162-residue protein sequence, read N- to C-terminus: Transcription elongation factor GreA (162 aa).

The stretch at Glu44–Ala72 forms a coiled coil.

It belongs to the GreA/GreB family.

Its function is as follows. Necessary for efficient RNA polymerase transcription elongation past template-encoded arresting sites. The arresting sites in DNA have the property of trapping a certain fraction of elongating RNA polymerases that pass through, resulting in locked ternary complexes. Cleavage of the nascent transcript by cleavage factors such as GreA or GreB allows the resumption of elongation from the new 3'terminus. GreA releases sequences of 2 to 3 nucleotides. This Nautilia profundicola (strain ATCC BAA-1463 / DSM 18972 / AmH) protein is Transcription elongation factor GreA.